The following is a 437-amino-acid chain: Enolase (437 aa).

Glutamine 162 lines the (2R)-2-phosphoglycerate pocket. Residue glutamate 204 is the Proton donor of the active site. Mg(2+) contacts are provided by aspartate 251, glutamate 297, and aspartate 324. Lysine 349, arginine 378, serine 379, and lysine 400 together coordinate (2R)-2-phosphoglycerate. Residue lysine 349 is the Proton acceptor of the active site.

This sequence belongs to the enolase family. Mg(2+) is required as a cofactor.

It localises to the cytoplasm. It is found in the secreted. The protein resides in the cell surface. It carries out the reaction (2R)-2-phosphoglycerate = phosphoenolpyruvate + H2O. Its pathway is carbohydrate degradation; glycolysis; pyruvate from D-glyceraldehyde 3-phosphate: step 4/5. Catalyzes the reversible conversion of 2-phosphoglycerate (2-PG) into phosphoenolpyruvate (PEP). It is essential for the degradation of carbohydrates via glycolysis. This is Enolase from Chlorobium phaeovibrioides (strain DSM 265 / 1930) (Prosthecochloris vibrioformis (strain DSM 265)).